We begin with the raw amino-acid sequence, 249 residues long: Triosephosphate isomerase (249 aa).

9–11 (NWK) provides a ligand contact to substrate. Residue histidine 95 is the Electrophile of the active site. Catalysis depends on glutamate 165, which acts as the Proton acceptor. Residues glycine 171, serine 211, and 232–233 (GG) each bind substrate.

It belongs to the triosephosphate isomerase family. As to quaternary structure, homodimer.

The protein localises to the cytoplasm. It carries out the reaction D-glyceraldehyde 3-phosphate = dihydroxyacetone phosphate. Its pathway is carbohydrate biosynthesis; gluconeogenesis. It participates in carbohydrate degradation; glycolysis; D-glyceraldehyde 3-phosphate from glycerone phosphate: step 1/1. In terms of biological role, involved in the gluconeogenesis. Catalyzes stereospecifically the conversion of dihydroxyacetone phosphate (DHAP) to D-glyceraldehyde-3-phosphate (G3P). The polypeptide is Triosephosphate isomerase (Chlorobium phaeobacteroides (strain DSM 266 / SMG 266 / 2430)).